Here is a 77-residue protein sequence, read N- to C-terminus: Tachyplesin-1 (77 aa).

A signal peptide spans 1–23 (MKKLVIALCLMMVLAVMVEEAEA). Disulfide bonds link Cys26-Cys39 and Cys30-Cys35. Arg40 is modified (arginine amide). Residues 41–77 (GKRNEVRQYRDRGYDVRAIPEETFFTRQDEDEDDDEE) constitute a propeptide that is removed on maturation.

Belongs to the tachyplesin/polyphemusin family. In terms of tissue distribution, hemocytes.

It localises to the secreted. Significantly inhibits the growth of Gram-negative and Gram-positive bacteria. The polypeptide is Tachyplesin-1 (Tachypleus tridentatus (Japanese horseshoe crab)).